Reading from the N-terminus, the 233-residue chain is MREHRPIIALDFPSFEAVKEFLALFPAEESLYLKVGMELYYAAGPEIVSYLKGLGHSVFLDLKLHDIPNTVKSAMKVLSQLGVDMTNVHAAGGVEMMKAAREGLGSQAKLIAVTQLTSTSEAQMQEFQNIQTSLQESVIHYAKKTAEAGLDGVVCSAQEVQVIKQATNPDFICLTPGIRPAGVAVGDQKRVMTPADAYQIGSDYIVVGRPITQAEDPVAAYHAIKDEWTQDWN.

Substrate-binding positions include D11, K34, D61–T70, T117, R179, Q188, G208, and R209. K63 acts as the Proton donor in catalysis.

It belongs to the OMP decarboxylase family. Type 1 subfamily. In terms of assembly, homodimer.

The catalysed reaction is orotidine 5'-phosphate + H(+) = UMP + CO2. It participates in pyrimidine metabolism; UMP biosynthesis via de novo pathway; UMP from orotate: step 2/2. Catalyzes the decarboxylation of orotidine 5'-monophosphate (OMP) to uridine 5'-monophosphate (UMP). The sequence is that of Orotidine 5'-phosphate decarboxylase from Streptococcus pneumoniae (strain P1031).